The following is a 103-amino-acid chain: Large ribosomal subunit protein bL21 (103 aa).

This sequence belongs to the bacterial ribosomal protein bL21 family. Part of the 50S ribosomal subunit. Contacts protein L20.

This protein binds to 23S rRNA in the presence of protein L20. This chain is Large ribosomal subunit protein bL21, found in Mannheimia succiniciproducens (strain KCTC 0769BP / MBEL55E).